The primary structure comprises 146 residues: Large ribosomal subunit protein bL21 (146 aa).

The disordered stretch occupies residues 96–146; it reads KKKTRRKMGHRQELTRVMVKSISITNSTPKTSSKTEVKKKSTSPKASNPEN.

The protein belongs to the bacterial ribosomal protein bL21 family. In terms of assembly, part of the 50S ribosomal subunit. Contacts protein L20.

In terms of biological role, this protein binds to 23S rRNA in the presence of protein L20. In Prochlorococcus marinus subsp. pastoris (strain CCMP1986 / NIES-2087 / MED4), this protein is Large ribosomal subunit protein bL21.